A 462-amino-acid chain; its full sequence is Putative amidase AmiB2 (462 aa).

Active-site charge relay system residues include K81 and S155. S179 acts as the Acyl-ester intermediate in catalysis.

This sequence belongs to the amidase family.

It catalyses the reaction a monocarboxylic acid amide + H2O = a monocarboxylate + NH4(+). In Mycobacterium bovis (strain ATCC BAA-935 / AF2122/97), this protein is Putative amidase AmiB2 (amiB2).